The sequence spans 194 residues: Cysteine and glycine-rich protein 2 (194 aa).

One can recognise an LIM zinc-binding 1 domain in the interval 10-61 (CGACGRTVYHAEEVQCDGRSFHRCCFLCMVCRKNLDSTTVAIHDAEVYCKSC). The short motif at 64–69 (KKYGPK) is the Nuclear localization signal element. The tract at residues 85-110 (GERLGIKPESSPSPHRPTTNPNTSKF) is disordered. Positions 94–110 (SSPSPHRPTTNPNTSKF) are enriched in polar residues. In terms of domain architecture, LIM zinc-binding 2 spans 120–171 (CSRCGDSVYAAEKVIGAGKPWHKNCFRCAKCGKSLESTTLTEKEGEIYCKGC).

It is found in the nucleus. Interacts with zyxin. May be a component of a signal transduction pathway that mediates adhesion-stimulated changes in gene expression. Totally down-regulated in transformed cells. This chain is Cysteine and glycine-rich protein 2 (CSRP2), found in Coturnix japonica (Japanese quail).